The primary structure comprises 242 residues: C-reactive protein 1.1 (242 aa).

Positions 1-24 (MKTFHGPTCGTAVSLCLLLFLTSA) are cleaved as a signal peptide. The Pentraxin (PTX) domain occupies 30–241 (ITSKVKFPPS…GVVLSPNEIC (212 aa)). Residues threonine 60 and tyrosine 63 each contribute to the phosphocholine site. 2 disulfide bridges follow: cysteine 62/cysteine 125 and cysteine 112/cysteine 144. Residues aspartate 85 and asparagine 86 each coordinate Ca(2+). Asparagine 147 carries an N-linked (GlcNAc...) asparagine glycan. 3 residues coordinate Ca(2+): glutamine 169, aspartate 170, and glutamine 180. Cysteines 207 and 241 form a disulfide.

The protein belongs to the pentraxin family. In terms of assembly, homopentamer. Pentraxin (or pentaxin) have a discoid arrangement of 5 non-covalently bound subunits. Ca(2+) is required as a cofactor.

The protein resides in the secreted. Might serve the role of immunoglobulins. This Limulus polyphemus (Atlantic horseshoe crab) protein is C-reactive protein 1.1.